We begin with the raw amino-acid sequence, 290 residues long: MDKLIKTISASGAFRAYVLDCTETVRYAQERHHTLSSSTVALGRTLIANQILAANQKGDSKVTVKVIGDSSFGHIISVADTKGHVKGYIQNPGVDIKKTATGEVLVGPFMGQGHFVTITDYGTGNPYTSTTPLITGEIGEDLAYYLTESEQTPSAVGLNVLLDQEDKVKVAGGFMLQVLPGASDEEISHYEKRIQEMPAISTLLASENHIDALLAAIYGEEPYKRLAEEQLSFQCDCSKERFASALMNLPTADLQAMRDEDQGAEIVCQFCGIKYQFTEADLEVLINDKA.

Intrachain disulfides connect Cys-235/Cys-237 and Cys-268/Cys-271.

This sequence belongs to the HSP33 family. In terms of processing, under oxidizing conditions two disulfide bonds are formed involving the reactive cysteines. Under reducing conditions zinc is bound to the reactive cysteines and the protein is inactive.

Its subcellular location is the cytoplasm. Its function is as follows. Redox regulated molecular chaperone. Protects both thermally unfolding and oxidatively damaged proteins from irreversible aggregation. Plays an important role in the bacterial defense system toward oxidative stress. This is 33 kDa chaperonin from Streptococcus equi subsp. zooepidemicus (strain H70).